We begin with the raw amino-acid sequence, 43 residues long: Protein PsbN (43 aa).

The chain crosses the membrane as a helical span at residues Leu7–Phe27.

The protein belongs to the PsbN family.

It localises to the cellular thylakoid membrane. Functionally, may play a role in photosystem I and II biogenesis. This Picosynechococcus sp. (strain ATCC 27264 / PCC 7002 / PR-6) (Agmenellum quadruplicatum) protein is Protein PsbN.